Here is an 880-residue protein sequence, read N- to C-terminus: Alanine--tRNA ligase (880 aa).

Positions 567, 571, 669, and 673 each coordinate Zn(2+).

Belongs to the class-II aminoacyl-tRNA synthetase family. It depends on Zn(2+) as a cofactor.

Its subcellular location is the cytoplasm. It catalyses the reaction tRNA(Ala) + L-alanine + ATP = L-alanyl-tRNA(Ala) + AMP + diphosphate. In terms of biological role, catalyzes the attachment of alanine to tRNA(Ala) in a two-step reaction: alanine is first activated by ATP to form Ala-AMP and then transferred to the acceptor end of tRNA(Ala). Also edits incorrectly charged Ser-tRNA(Ala) and Gly-tRNA(Ala) via its editing domain. The protein is Alanine--tRNA ligase of Bacillus thuringiensis (strain Al Hakam).